We begin with the raw amino-acid sequence, 487 residues long: MELLRSARPHPKEKLKNVIEWFHWLLREAELYDVRYPVKGAYVWRPYGMKLRRNVEELIRRVHDETGHEEVLFPVFIPYEFFGKESQHIRGFEKEVFWVSKGGEGGERLVLRPTSETAIMPMVKLWIQDYKDLPLRLYQIVSVFRAETKMTHPMIRLREISMFKEAHTVHVDREDAERQVREAVEIYKRIFDEMCLAYMINKRPDWDKFAGAEYTIAFDTVLPDGRTLQIGTAHYLGTNFTRVFEVTYLDADGTRKLAHTTSYGISERSIAAMLITHGDDGGTTLPPKLAPIQIAVVPIYYSDEEMPLVMKFVEEVVAALKGAGLRLHVDDRRDKTPGWKFYYWELKGVPLRLEVGKRDVEKRQVVVTRRDTLEKYAVALGELVDAVRELMKAVEDNLRRRAWEELRSKIVKVQSLEEAKKAIKEGKVVEVPWSGDNQCGMKIQELLGADALGIPMDSEASIGGYDARDLACGERRAELWLRLSERY.

It belongs to the class-II aminoacyl-tRNA synthetase family. ProS type 3 subfamily. In terms of assembly, homodimer.

Its subcellular location is the cytoplasm. It catalyses the reaction tRNA(Pro) + L-proline + ATP = L-prolyl-tRNA(Pro) + AMP + diphosphate. Its function is as follows. Catalyzes the attachment of proline to tRNA(Pro) in a two-step reaction: proline is first activated by ATP to form Pro-AMP and then transferred to the acceptor end of tRNA(Pro). The sequence is that of Proline--tRNA ligase from Pyrobaculum neutrophilum (strain DSM 2338 / JCM 9278 / NBRC 100436 / V24Sta) (Thermoproteus neutrophilus).